The following is a 36-amino-acid chain: Amanexitide proprotein 1 (36 aa).

A propeptide spanning residues 1-10 (MSDINTARLP) is cleaved from the precursor. The cyclopeptide (Val-Pro) cross-link spans 11–19 (VFSLPVFFP). Positions 20 to 36 (FVSDDIQAVLTRGESLC) are excised as a propeptide.

It belongs to the MSDIN fungal toxin family. In terms of processing, processed by the macrocyclase-peptidase enzyme POPB to yield a toxic cyclic nonapeptide. POPB first removes 10 residues from the N-terminus. Conformational trapping of the remaining peptide forces the enzyme to release this intermediate rather than proceed to macrocyclization. The enzyme rebinds the remaining peptide in a different conformation and catalyzes macrocyclization of the N-terminal 9 residues. In terms of tissue distribution, expressed in basidiocarps.

Cyclic nonapeptide that belongs to the MSDIN-like toxin family responsible for a large number of food poisoning cases and deaths. The protein is Amanexitide proprotein 1 of Amanita exitialis (Guangzhou destroying angel).